Consider the following 448-residue polypeptide: Adenylosuccinate synthetase (448 aa).

GTP contacts are provided by residues 36–42 (GDEGKGK) and 64–66 (GHT). The active-site Proton acceptor is the aspartate 37. Positions 37 and 64 each coordinate Mg(2+). IMP is bound by residues 37-40 (DEGK), 62-65 (NAGH), threonine 154, arginine 168, asparagine 246, threonine 261, and arginine 325. Histidine 65 acts as the Proton donor in catalysis. Residue 321–327 (VTTKRKR) coordinates substrate. GTP-binding positions include arginine 327, 353–355 (KLD), and 436–438 (GVG).

Belongs to the adenylosuccinate synthetase family. In terms of assembly, homodimer. The cofactor is Mg(2+).

The protein resides in the cytoplasm. It catalyses the reaction IMP + L-aspartate + GTP = N(6)-(1,2-dicarboxyethyl)-AMP + GDP + phosphate + 2 H(+). It participates in purine metabolism; AMP biosynthesis via de novo pathway; AMP from IMP: step 1/2. Plays an important role in the de novo pathway and in the salvage pathway of purine nucleotide biosynthesis. Catalyzes the first committed step in the biosynthesis of AMP from IMP. This chain is Adenylosuccinate synthetase, found in Drosophila mojavensis (Fruit fly).